A 68-amino-acid chain; its full sequence is Large ribosomal subunit protein uL29 (68 aa).

This sequence belongs to the universal ribosomal protein uL29 family.

The sequence is that of Large ribosomal subunit protein uL29 from Rhodopseudomonas palustris (strain BisB18).